The sequence spans 145 residues: uncharacterized protein (145 aa).

Transmembrane regions (helical) follow at residues 20–40 (LIGP…GMFF) and 116–136 (MIML…VLSA).

It is found in the membrane. This is an uncharacterized protein from Saccharomyces cerevisiae (strain ATCC 204508 / S288c) (Baker's yeast).